Consider the following 112-residue polypeptide: Large ribosomal subunit protein uL22 (112 aa).

Belongs to the universal ribosomal protein uL22 family. In terms of assembly, part of the 50S ribosomal subunit.

In terms of biological role, this protein binds specifically to 23S rRNA; its binding is stimulated by other ribosomal proteins, e.g. L4, L17, and L20. It is important during the early stages of 50S assembly. It makes multiple contacts with different domains of the 23S rRNA in the assembled 50S subunit and ribosome. The globular domain of the protein is located near the polypeptide exit tunnel on the outside of the subunit, while an extended beta-hairpin is found that lines the wall of the exit tunnel in the center of the 70S ribosome. The polypeptide is Large ribosomal subunit protein uL22 (Moorella thermoacetica (strain ATCC 39073 / JCM 9320)).